Consider the following 289-residue polypeptide: UPF0276 protein BB1291 (289 aa).

This sequence belongs to the UPF0276 family.

The chain is UPF0276 protein BB1291 from Bordetella bronchiseptica (strain ATCC BAA-588 / NCTC 13252 / RB50) (Alcaligenes bronchisepticus).